Reading from the N-terminus, the 279-residue chain is uncharacterized protein (279 aa).

3 stretches are compositionally biased toward low complexity: residues 1–25, 86–151, and 232–250; these read MNEN…NNNN, PSQS…NGNN, and NKNN…DDNN. Disordered stretches follow at residues 1-27, 83-153, and 213-260; these read MNEN…NNIK, NLFP…NNID, and QSVN…KVKS.

This is an uncharacterized protein from Dictyostelium discoideum (Social amoeba).